The following is a 231-amino-acid chain: NDR1/HIN1-like protein 3 (231 aa).

The chain crosses the membrane as a helical span at residues 47–67; sequence VIFNILITIAVLLGIAALIIW. N102, N135, N145, and N215 each carry an N-linked (GlcNAc...) asparagine glycan.

May form oligomers or be a component of larger protein complex in plasma membranes. Glycosylated. In terms of tissue distribution, expressed in roots, young and senescing leaves, cauline leaves, stems and siliques.

The protein localises to the cell membrane. In terms of biological role, confers resistance to Pseudomonas syringae pv. tomato DC3000 (Pst DC3000). This Arabidopsis thaliana (Mouse-ear cress) protein is NDR1/HIN1-like protein 3.